A 480-amino-acid polypeptide reads, in one-letter code: Serine/threonine-protein kinase WAG2 (480 aa).

Residues 88–396 (LKLIRHLGTG…AQDIKRHPFF (309 aa)) enclose the Protein kinase domain. Residues 94–102 (LGTGNLGRV) and lysine 117 contribute to the ATP site. The active-site Proton acceptor is aspartate 213.

Belongs to the protein kinase superfamily. Ser/Thr protein kinase family. As to expression, expressed in root tips, lateral root primordia and emerging true leaf primordia.

The protein resides in the cytoplasm. It is found in the cytosol. The catalysed reaction is L-seryl-[protein] + ATP = O-phospho-L-seryl-[protein] + ADP + H(+). It carries out the reaction L-threonyl-[protein] + ATP = O-phospho-L-threonyl-[protein] + ADP + H(+). Serine/threonine-protein kinase involved in the regulation of auxin signaling. Acts as a positive regulator of cellular auxin efflux and regulates organ development by enhancing PIN-mediated polar auxin transport. Phosphorylates conserved serine residues in the PIN auxin efflux carriers. Phosphorylation of PIN proteins is required and sufficient for apical-basal PIN polarity that enables directional intercellular auxin fluxes, which mediate differential growth, tissue patterning and organogenesis. Acts as a suppressor of root waving. This chain is Serine/threonine-protein kinase WAG2 (WAG2), found in Arabidopsis thaliana (Mouse-ear cress).